The primary structure comprises 586 residues: Asparagine synthetase [glutamine-hydrolyzing] 2 (586 aa).

Catalysis depends on Cys-2, which acts as the For GATase activity. Residues 2–185 (CGILAVLGCS…PGHLYSSKEK (184 aa)) form the Glutamine amidotransferase type-2 domain. Residues 50-54 (RLAIV), 75-77 (NGE), and Asp-98 contribute to the L-glutamine site. The region spanning 193 to 516 (PPWFSEAIPS…PQNSARLSVP (324 aa)) is the Asparagine synthetase domain. ATP-binding positions include Leu-231, Val-267, and 341–342 (SG).

The catalysed reaction is L-aspartate + L-glutamine + ATP + H2O = L-asparagine + L-glutamate + AMP + diphosphate + H(+). It functions in the pathway amino-acid biosynthesis; L-asparagine biosynthesis; L-asparagine from L-aspartate (L-Gln route): step 1/1. The protein is Asparagine synthetase [glutamine-hydrolyzing] 2 (AS2) of Lotus japonicus (Lotus corniculatus var. japonicus).